The sequence spans 61 residues: Small ribosomal subunit protein uS14 (61 aa).

The Zn(2+) site is built by cysteine 24, cysteine 27, cysteine 40, and cysteine 43.

Belongs to the universal ribosomal protein uS14 family. Zinc-binding uS14 subfamily. Part of the 30S ribosomal subunit. Contacts proteins S3 and S10. Zn(2+) is required as a cofactor.

Binds 16S rRNA, required for the assembly of 30S particles and may also be responsible for determining the conformation of the 16S rRNA at the A site. The polypeptide is Small ribosomal subunit protein uS14 (Campylobacter jejuni subsp. jejuni serotype O:6 (strain 81116 / NCTC 11828)).